The chain runs to 858 residues: MSDARNVAVGVEEEFHILDLTTRQLVPRAEEILQRLDKDSFSPELLKSVVETNSQPTVDLLALRSNLLDLRRRLAEAAGELGLGPAASGTVPILDMDLLDVSRDARYEQMTEDYQIVAREQLICGAQVHVDVADRDLAMAVVAWTAPWLPMLLALSASSPYWLGADSGYASMRTLVWQRWPTAGVAGSFQTAAEYDQLIADLIKSGVISDPGMVYFDVRPSAHLPTVELRICDACPDVDNVILIAGLFRALVGRAIEEIEAGGQAPPPRAELLRAATWRAARSGLEGDLVDIFGAGPVPARAMLRRMLEEVRPQLERYDDWELIDNLAEQAAGRGSSALRQRRAFARRGLLTDVADLILAETRDVPPAGASLGVAPAVSAPDQIAPILLERYQPAGYDEVVDEHGAVRPQYRAVMRTLERLGPDTLDERVGAREAEQTDRGITFRVNGDSASRPFPFDIVPRIVAADDWAVLGRGLGQRVRALEAFLHDVYGERAAVADGIVPPWVVNDAPGLRHGGRAPGRDAIRITTAGIDLVRGGDGGWLVLEDNLRVPSGIAYAVEGRRLAESVLPELGPPPGILRLGTVPALLHDALVAAAPPAVTGEPAVAVLTSGPADSAYFEHAMLAEEMGVPLVEPGALLVDDDVAYRVDDGRRRRVDVLYRRIDEDELFAAPGADGAPLGPALLRAVRAGQVSVANAPGNGIGDDKVVYAYVPRMVTYYLGEQPVLDDVPTYVCGDPEQCEHVLANLDQLVVKPVDGFGGSGVVIGPHAEPYQLTAVREQILADPRRWIGQEVVALSTHPTWHDSHLEPCAVDLRVFVYAGVEPVVVPAALSRVAPPGSLIVNSSQGGGSKDTWIPRR.

A carboxylate-amine ligase region spans residues 1–372 (MSDARNVAVG…RDVPPAGASL (372 aa)). The interval 373 to 858 (GVAPAVSAPD…GSKDTWIPRR (486 aa)) is unknown.

This sequence in the N-terminal section; belongs to the glutamate--cysteine ligase type 2 family. YbdK subfamily.

It carries out the reaction L-cysteine + L-glutamate + ATP = gamma-L-glutamyl-L-cysteine + ADP + phosphate + H(+). Functionally, ATP-dependent carboxylate-amine ligase which exhibits weak glutamate--cysteine ligase activity. The chain is Putative glutamate--cysteine ligase 2-3 from Frankia alni (strain DSM 45986 / CECT 9034 / ACN14a).